The following is a 267-amino-acid chain: L-aspartate dehydrogenase 2 (267 aa).

2 residues coordinate NAD(+): Ala123 and Asn189. His219 is a catalytic residue.

The protein belongs to the L-aspartate dehydrogenase family.

It carries out the reaction L-aspartate + NADP(+) + H2O = oxaloacetate + NH4(+) + NADPH + H(+). The enzyme catalyses L-aspartate + NAD(+) + H2O = oxaloacetate + NH4(+) + NADH + H(+). The protein operates within cofactor biosynthesis; NAD(+) biosynthesis; iminoaspartate from L-aspartate (dehydrogenase route): step 1/1. In terms of biological role, specifically catalyzes the NAD or NADP-dependent dehydrogenation of L-aspartate to iminoaspartate. In Bordetella bronchiseptica (strain ATCC BAA-588 / NCTC 13252 / RB50) (Alcaligenes bronchisepticus), this protein is L-aspartate dehydrogenase 2.